Here is a 421-residue protein sequence, read N- to C-terminus: Tol-Pal system protein TolA (421 aa).

At 1-13 (MSKATEQNDKLKR) the chain is on the cytoplasmic side. A helical membrane pass occupies residues 14 to 34 (AIIISAVLHVILFAALIWSSF). The Periplasmic portion of the chain corresponds to 35-421 (DENIEASAGG…FKNAPLDFKP (387 aa)). The domain II (alpha-helical) stretch occupies residues 48-310 (SSIDAVMVDS…LSSGKNAPKT (263 aa)). The tract at residues 65–266 (KRMQSQESSA…KAAADKKAAA (202 aa)) is disordered. Basic and acidic residues-rich tracts occupy residues 73 to 175 (SAKR…EAEA) and 206 to 266 (EARK…KAAA). 13 repeat units span residues 224 to 229 (EKKAAA), 230 to 234 (EKAAA), 235 to 240 (DKKAAA), 241 to 245 (EKAAA), 246 to 250 (DKKAA), 251 to 255 (EKAAA), 256 to 260 (EKAAA), 261 to 266 (DKKAAA), 267 to 271 (EKAAA), 272 to 277 (DKKAAA), 278 to 282 (AKAAA), 283 to 287 (EKAAA), and 288 to 292 (AKAAA). The tract at residues 224-292 (EKKAAAEKAA…EKAAAAKAAA (69 aa)) is 13 X tandem repeats of [EDA]-K(1,2)-A(2,4). The tract at residues 300 to 336 (ELSSGKNAPKTGGGAKGNNASPAGSGNTKNNGASGAD) is disordered. The interval 311 to 421 (GGGAKGNNAS…FKNAPLDFKP (111 aa)) is domain III (functional). Positions 317–332 (NNASPAGSGNTKNNGA) are enriched in polar residues. C363 and C388 are joined by a disulfide.

It belongs to the TolA family. As to quaternary structure, the Tol-Pal system is composed of five core proteins: the inner membrane proteins TolA, TolQ and TolR, the periplasmic protein TolB and the outer membrane protein Pal. They form a network linking the inner and outer membranes and the peptidoglycan layer. TolA interacts with TolQ and TolR via its N-terminal domain. Interacts with CpoB, and with the trimeric porins OmpC, OmpF, PhoE and LamB via its central domain. Interacts with TolB via its C-terminal domain. Also interacts with Pal via its C-terminal domain. This interaction is proton motive force dependent and requires TolQ and TolR.

It is found in the cell inner membrane. Functionally, part of the Tol-Pal system, which plays a role in outer membrane invagination during cell division and is important for maintaining outer membrane integrity. The Tol-Pal system is also required for polar localization of chemoreceptors clusters. The system also appears to be required for the activity of several outer membrane-localized enzymes with cell wall remodeling activity. Is involved in the uptake of group A colicins (colicins A, E1, E2, E3, and K) and in the uptake of filamentous phage DNA. The sequence is that of Tol-Pal system protein TolA from Escherichia coli (strain K12).